Consider the following 368-residue polypeptide: Glutamate 5-kinase (368 aa).

Position 9 (lysine 9) interacts with ATP. Residues serine 49, aspartate 136, and asparagine 148 each coordinate substrate. Residues 168–169 (TD) and 210–216 (TGGMMTK) each bind ATP. In terms of domain architecture, PUA spans 275–353 (AGIITIDDGA…ADIENVLGYE (79 aa)).

The protein belongs to the glutamate 5-kinase family.

The protein resides in the cytoplasm. The enzyme catalyses L-glutamate + ATP = L-glutamyl 5-phosphate + ADP. It participates in amino-acid biosynthesis; L-proline biosynthesis; L-glutamate 5-semialdehyde from L-glutamate: step 1/2. In terms of biological role, catalyzes the transfer of a phosphate group to glutamate to form L-glutamate 5-phosphate. The protein is Glutamate 5-kinase of Haemophilus influenzae (strain 86-028NP).